A 570-amino-acid polypeptide reads, in one-letter code: Protein NRT1/ PTR FAMILY 8.2 (570 aa).

Threonine 99 carries the phosphothreonine modification. A run of 10 helical transmembrane segments spans residues 100–120, 136–156, 182–202, 210–230, 335–355, 370–390, 414–434, 454–474, 493–513, and 537–557; these read IASFVVIYIAGMTLLTISASV, AGQTAITFIALYLIALGTGGI, FFNWFYFVINVGAMIASSVLV, WGWGLGVPTVAMAIAVVFFFA, IWATGIVFASVYSQMGTVFVL, IPSASLSLFDTLSVLFWAPVY, IGIGLVISIFSMVSAGILEVA, IFWQVPQYFLVGCAEVFTFIG, ALSLTAIAFGNYLSTFLVTLV, and YFFWLLAGLSFLNFLVYLWIA.

This sequence belongs to the major facilitator superfamily. Proton-dependent oligopeptide transporter (POT/PTR) (TC 2.A.17) family. Expressed in developing and germinating pollen grains and ovules.

It is found in the cell membrane. Peptide transporter. Mediates the transport of di- and tripeptides. High affinity transporter. Involved in the uptake of peptides during pollen germination and tube growth. This chain is Protein NRT1/ PTR FAMILY 8.2 (NPF8.2), found in Arabidopsis thaliana (Mouse-ear cress).